Here is a 536-residue protein sequence, read N- to C-terminus: Multicopper oxidase terE (536 aa).

The disordered stretch occupies residues 1–21; the sequence is MHWHGLSQSTAPFSDGSPQAS. Plastocyanin-like domains follow at residues 1 to 67, 79 to 238, and 354 to 488; these read MHWH…VEEK, ERIL…LSYN, and TVQK…VWMM. Residues histidine 2, histidine 4, histidine 48, and histidine 50 each contribute to the Cu cation site. Cu cation is bound at residue histidine 397.

This sequence belongs to the multicopper oxidase family.

Its pathway is secondary metabolite biosynthesis. Its function is as follows. Multicopper oxidase; part of the gene cluster that mediates the biosynthesis of terrein, a fungal metabolite with ecological, antimicrobial, antiproliferative, and antioxidative activities. The first step in the pathway is performed by the polyketide synthase terA that produces 4-hydroxy-6-methylpyranon (4-HMP), orsellinic acid (OA), and 2,3-dehydro-6-hydroxymellein (2,3-dehydro-6-HM) by condensing acetyl-CoA with two, three, or four malonyl-CoA units, respectively. 4-HMP and OA are not pathway intermediates, but are rather shunt or side products. 2,3-dehydro-6-HM is further converted to 6-hydroxymellein (6-HM) by the 6-hydroxymellein synthase terB. The monooxygenases terC and terD, the multicopper oxidase terE and the Kelch-like protein terF are then involved in the transformation of 6-HM to terrein. Even if they are co-regulated with the other terrein cluster genes, terH and terI seem to be dispensable for terrein production; whereas one or both of the 2 transporters terG and terJ are probably required for efficient secretion of metabolites. The protein is Multicopper oxidase terE of Aspergillus terreus (strain NIH 2624 / FGSC A1156).